A 611-amino-acid polypeptide reads, in one-letter code: Elongation factor 4 (611 aa).

Positions 11–193 (KHIRNFSIVA…KIVKDVPAPT (183 aa)) constitute a tr-type G domain. GTP contacts are provided by residues 23–28 (DHGKST) and 140–143 (NKID).

It belongs to the TRAFAC class translation factor GTPase superfamily. Classic translation factor GTPase family. LepA subfamily.

The protein localises to the cell membrane. It carries out the reaction GTP + H2O = GDP + phosphate + H(+). Functionally, required for accurate and efficient protein synthesis under certain stress conditions. May act as a fidelity factor of the translation reaction, by catalyzing a one-codon backward translocation of tRNAs on improperly translocated ribosomes. Back-translocation proceeds from a post-translocation (POST) complex to a pre-translocation (PRE) complex, thus giving elongation factor G a second chance to translocate the tRNAs correctly. Binds to ribosomes in a GTP-dependent manner. This chain is Elongation factor 4, found in Limosilactobacillus reuteri (strain DSM 20016) (Lactobacillus reuteri).